The following is a 104-amino-acid chain: Large ribosomal subunit protein bL21 (104 aa).

Belongs to the bacterial ribosomal protein bL21 family. Part of the 50S ribosomal subunit. Contacts protein L20.

Its function is as follows. This protein binds to 23S rRNA in the presence of protein L20. The sequence is that of Large ribosomal subunit protein bL21 from Leptospira interrogans serogroup Icterohaemorrhagiae serovar copenhageni (strain Fiocruz L1-130).